We begin with the raw amino-acid sequence, 444 residues long: Phosphoglucosamine mutase (444 aa).

Catalysis depends on Ser101, which acts as the Phosphoserine intermediate. Mg(2+) is bound by residues Ser101, Asp240, Asp242, and Asp244. The residue at position 101 (Ser101) is a Phosphoserine.

The protein belongs to the phosphohexose mutase family. Mg(2+) is required as a cofactor. Activated by phosphorylation.

It catalyses the reaction alpha-D-glucosamine 1-phosphate = D-glucosamine 6-phosphate. Functionally, catalyzes the conversion of glucosamine-6-phosphate to glucosamine-1-phosphate. This Aeromonas hydrophila subsp. hydrophila (strain ATCC 7966 / DSM 30187 / BCRC 13018 / CCUG 14551 / JCM 1027 / KCTC 2358 / NCIMB 9240 / NCTC 8049) protein is Phosphoglucosamine mutase.